The following is a 206-amino-acid chain: Small ribosomal subunit protein uS4 (206 aa).

The S4 RNA-binding domain occupies 96 to 156 (TRLDNVVYRM…EKSRTQARIK (61 aa)).

This sequence belongs to the universal ribosomal protein uS4 family. Part of the 30S ribosomal subunit. Contacts protein S5. The interaction surface between S4 and S5 is involved in control of translational fidelity.

In terms of biological role, one of the primary rRNA binding proteins, it binds directly to 16S rRNA where it nucleates assembly of the body of the 30S subunit. Its function is as follows. With S5 and S12 plays an important role in translational accuracy. The chain is Small ribosomal subunit protein uS4 from Shewanella halifaxensis (strain HAW-EB4).